The chain runs to 210 residues: Thiamine-phosphate synthase (210 aa).

4-amino-2-methyl-5-(diphosphooxymethyl)pyrimidine is bound by residues 38–42 (QFREK) and N70. Mg(2+) is bound by residues D71 and D90. 4-amino-2-methyl-5-(diphosphooxymethyl)pyrimidine is bound at residue S107. 2-[(2R,5Z)-2-carboxy-4-methylthiazol-5(2H)-ylidene]ethyl phosphate is bound at residue 132–134 (TKT). K135 provides a ligand contact to 4-amino-2-methyl-5-(diphosphooxymethyl)pyrimidine. 183–184 (IS) provides a ligand contact to 2-[(2R,5Z)-2-carboxy-4-methylthiazol-5(2H)-ylidene]ethyl phosphate.

This sequence belongs to the thiamine-phosphate synthase family. Requires Mg(2+) as cofactor.

It catalyses the reaction 2-[(2R,5Z)-2-carboxy-4-methylthiazol-5(2H)-ylidene]ethyl phosphate + 4-amino-2-methyl-5-(diphosphooxymethyl)pyrimidine + 2 H(+) = thiamine phosphate + CO2 + diphosphate. It carries out the reaction 2-(2-carboxy-4-methylthiazol-5-yl)ethyl phosphate + 4-amino-2-methyl-5-(diphosphooxymethyl)pyrimidine + 2 H(+) = thiamine phosphate + CO2 + diphosphate. The catalysed reaction is 4-methyl-5-(2-phosphooxyethyl)-thiazole + 4-amino-2-methyl-5-(diphosphooxymethyl)pyrimidine + H(+) = thiamine phosphate + diphosphate. The protein operates within cofactor biosynthesis; thiamine diphosphate biosynthesis; thiamine phosphate from 4-amino-2-methyl-5-diphosphomethylpyrimidine and 4-methyl-5-(2-phosphoethyl)-thiazole: step 1/1. Functionally, condenses 4-methyl-5-(beta-hydroxyethyl)thiazole monophosphate (THZ-P) and 2-methyl-4-amino-5-hydroxymethyl pyrimidine pyrophosphate (HMP-PP) to form thiamine monophosphate (TMP). This is Thiamine-phosphate synthase from Archaeoglobus fulgidus (strain ATCC 49558 / DSM 4304 / JCM 9628 / NBRC 100126 / VC-16).